Reading from the N-terminus, the 661-residue chain is Transcription factor ccg-8 (661 aa).

Positions 1–11 (MEHHHHHRHMH) are enriched in basic residues. Disordered regions lie at residues 1–69 (MEHH…QADN), 107–243 (SASS…LDDP), 255–279 (LKTD…DQNQ), and 354–398 (RTKS…RRTS). Composition is skewed to low complexity over residues 23–43 (HQQY…QHQQ) and 107–140 (SASS…SSNR). Positions 173–187 (DHSLPSIASLNVGSS) are enriched in polar residues. Positions 192-203 (QPTPTPQPPPKF) are enriched in pro residues. Positions 357 to 366 (SSSDTRESGQ) are enriched in basic and acidic residues.

Transcription factor that plays a pivotal role in azole adaptive responses by regulating the drug accumulation in the cells. Affects the transcriptional responses to ketoconazole of many genes, including the target gene (erg11), an azole transporter gene (cdr4), a hexose transporter gene (hxt13), a stress response gene (kts-1), two transcription factor genes (named kts-2 and fsd-1/ndt80). Also regulates phospholipid synthesis that is not involved in azole resistance. The polypeptide is Transcription factor ccg-8 (Neurospora crassa (strain ATCC 24698 / 74-OR23-1A / CBS 708.71 / DSM 1257 / FGSC 987)).